Consider the following 439-residue polypeptide: Trigger factor (439 aa).

In terms of domain architecture, PPIase FKBP-type spans Gly158–Met233. The tract at residues Lys410–Glu439 is disordered. A compositionally biased stretch (acidic residues) spans Ala414–Glu428.

It belongs to the FKBP-type PPIase family. Tig subfamily.

It is found in the cytoplasm. It carries out the reaction [protein]-peptidylproline (omega=180) = [protein]-peptidylproline (omega=0). Its function is as follows. Involved in protein export. Acts as a chaperone by maintaining the newly synthesized protein in an open conformation. Functions as a peptidyl-prolyl cis-trans isomerase. This is Trigger factor from Kosmotoga olearia (strain ATCC BAA-1733 / DSM 21960 / TBF 19.5.1).